The following is a 168-amino-acid chain: Protein-export protein SecB (168 aa).

A compositionally biased stretch (polar residues) spans 1-10 (MSDQGTNNGE). Positions 1-22 (MSDQGTNNGESGNGGAQNGEAP) are disordered.

The protein belongs to the SecB family. Homotetramer, a dimer of dimers. One homotetramer interacts with 1 SecA dimer.

It localises to the cytoplasm. Its function is as follows. One of the proteins required for the normal export of preproteins out of the cell cytoplasm. It is a molecular chaperone that binds to a subset of precursor proteins, maintaining them in a translocation-competent state. It also specifically binds to its receptor SecA. This Parvibaculum lavamentivorans (strain DS-1 / DSM 13023 / NCIMB 13966) protein is Protein-export protein SecB.